The following is a 299-amino-acid chain: Trans-aconitate 3-methyltransferase (299 aa).

The residue at position 2 (S2) is an N-acetylserine.

The protein belongs to the methyltransferase superfamily. Tam family.

It is found in the cytoplasm. It catalyses the reaction trans-aconitate + S-adenosyl-L-methionine = (E)-2-(methoxycarbonylmethyl)but-2-enedioate + S-adenosyl-L-homocysteine. Catalyzes the S-adenosylmethionine monomethyl esterification of trans-aconitate and 3-isopropylmalate at high affinity and of other molecules like cis-aconitate, isocitrate, and citrate at lower velocities and affinities. The function of trans-aconitate methylation appears to be in reducing the toxicity of this spontaneous breakdown product of cis-aconitate. The role of 3-isopropylmalate methylation is unclear but may represent a metabolic branch at 3-isopropylmalate, where some of the material is taken in the pathway leading to leucine and some is taken in a pathway to the 3-isopropylmalate methyl ester, a molecule that provides a signal to switch from vegetative to invasive growth in response to amino acid starvation. The chain is Trans-aconitate 3-methyltransferase (TMT1) from Saccharomyces cerevisiae (strain YJM789) (Baker's yeast).